The primary structure comprises 47 residues: Delta-actitoxin-Axm1g (47 aa).

3 cysteine pairs are disulfide-bonded: Cys4–Cys44, Cys6–Cys34, and Cys27–Cys45.

This sequence belongs to the sea anemone sodium channel inhibitory toxin family. Type I subfamily.

It is found in the secreted. The protein localises to the nematocyst. The chain is Delta-actitoxin-Axm1g from Anthopleura xanthogrammica (Giant green sea anemone).